The sequence spans 218 residues: Ropporin-1-like protein (218 aa).

An RIIa domain is found at 17–54 (PELPDILKQFTKAAIRTQPADVLQWSAGYFSALSRGDP).

Belongs to the ropporin family. In terms of assembly, component of the axonemal radial spoke complex 1 (RS1), at least composed of spoke head proteins RSPH1, RSPH3, RSPH9 and the cilia-specific component RSPH4A or sperm-specific component RSPH6A, spoke stalk proteins RSPH14, DNAJB13, DYDC1, ROPN1L and NME5, and the anchor protein IQUB. May interact with AKAP3. Interacts with FSCB; the interaction increases upon spermatozoa capacitation conditions. Interacts with CFAP61. Post-translationally, sumoylated, sumoylation decreases upon spermatozoa capacitation conditions. As to expression, testis-specific. Expression is restricted to germ cells.

The protein resides in the cell projection. It localises to the cilium. It is found in the flagellum. In terms of biological role, functions as part of axonemal radial spoke complexes that play an important part in the motility of sperm and cilia. Important for male fertility. With ROPN1, involved in fibrous sheath integrity and sperm motility, plays a role in PKA-dependent signaling processes required for spermatozoa capacitation. The protein is Ropporin-1-like protein (Ropn1l) of Mus musculus (Mouse).